A 369-amino-acid chain; its full sequence is S-(hydroxymethyl)glutathione dehydrogenase (369 aa).

Zn(2+) contacts are provided by Cys-40, His-62, Cys-92, Cys-95, Cys-98, Cys-106, and Cys-169.

It belongs to the zinc-containing alcohol dehydrogenase family. Class-III subfamily. Homodimer. It depends on Zn(2+) as a cofactor.

The protein resides in the cytoplasm. The enzyme catalyses S-(hydroxymethyl)glutathione + NADP(+) = S-formylglutathione + NADPH + H(+). It catalyses the reaction S-(hydroxymethyl)glutathione + NAD(+) = S-formylglutathione + NADH + H(+). The catalysed reaction is a primary alcohol + NAD(+) = an aldehyde + NADH + H(+). It carries out the reaction a secondary alcohol + NAD(+) = a ketone + NADH + H(+). The enzyme catalyses S-nitrosoglutathione + NADH + H(+) = S-(hydroxysulfenamide)glutathione + NAD(+). In terms of biological role, has high formaldehyde dehydrogenase activity in the presence of glutathione and catalyzes the oxidation of normal alcohols in a reaction that is not GSH-dependent. In addition, hemithiolacetals other than those formed from GSH, including omega-thiol fatty acids, also are substrates. Also acts as a S-nitroso-glutathione reductase by catalyzing the NADH-dependent reduction of S-nitrosoglutathione. The chain is S-(hydroxymethyl)glutathione dehydrogenase (frmA) from Photobacterium damsela subsp. piscicida (Pasteurella piscicida).